The sequence spans 82 residues: Cytotoxin 10 (82 aa).

The first 22 residues, 1–22 (MKTLLLTLVVVVTIVCLDLGYT), serve as a signal peptide directing secretion. 4 disulfide bridges follow: C25-C43, C36-C60, C64-C75, and C76-C81.

Belongs to the three-finger toxin family. Short-chain subfamily. Type IA cytotoxin sub-subfamily. Monomer in solution; Homodimer and oligomer in the presence of negatively charged lipids forming a pore with a size ranging between 20 and 30 Angstroms. Expressed by the venom gland.

The protein localises to the secreted. Its subcellular location is the target cell membrane. Functionally, shows cytolytic activity on many different cells by forming pore in lipid membranes. In vivo, increases heart rate or kills the animal by cardiac arrest. In addition, it binds to heparin with high affinity, interacts with Kv channel-interacting protein 1 (KCNIP1) in a calcium-independent manner, and binds to integrin alpha-V/beta-3 (ITGAV/ITGB3) with moderate affinity. This is Cytotoxin 10 from Naja atra (Chinese cobra).